The chain runs to 699 residues: Elongation factor G (699 aa).

The 276-residue stretch at 8–283 (EHIRNIGICA…AVVDFLPSPI (276 aa)) folds into the tr-type G domain. GTP is bound by residues 17–24 (AHIDAGKT), 81–85 (DTPGH), and 135–138 (NKMD).

It belongs to the TRAFAC class translation factor GTPase superfamily. Classic translation factor GTPase family. EF-G/EF-2 subfamily.

The protein localises to the cytoplasm. Functionally, catalyzes the GTP-dependent ribosomal translocation step during translation elongation. During this step, the ribosome changes from the pre-translocational (PRE) to the post-translocational (POST) state as the newly formed A-site-bound peptidyl-tRNA and P-site-bound deacylated tRNA move to the P and E sites, respectively. Catalyzes the coordinated movement of the two tRNA molecules, the mRNA and conformational changes in the ribosome. The chain is Elongation factor G from Rickettsia rickettsii (strain Iowa).